Reading from the N-terminus, the 369-residue chain is Putative 2-aminoethylphosphonate import ATP-binding protein PhnT (369 aa).

Residues 19–250 form the ABC transporter domain; the sequence is IVLDSLRVAY…PPNRFAAEFL (232 aa). ATP is bound at residue 51–58; it reads GPSGSGKT.

It belongs to the ABC transporter superfamily. 2-aminoethylphosphonate importer (TC 3.A.1.11.5) family.

The protein localises to the cell inner membrane. In terms of biological role, probably part of the PhnSTUV complex (TC 3.A.1.11.5) involved in 2-aminoethylphosphonate import. Probably responsible for energy coupling to the transport system. In Salmonella typhi, this protein is Putative 2-aminoethylphosphonate import ATP-binding protein PhnT (phnT).